We begin with the raw amino-acid sequence, 457 residues long: Argininosuccinate lyase (457 aa).

It belongs to the lyase 1 family. Argininosuccinate lyase subfamily.

The protein localises to the cytoplasm. It catalyses the reaction 2-(N(omega)-L-arginino)succinate = fumarate + L-arginine. Its pathway is amino-acid biosynthesis; L-arginine biosynthesis; L-arginine from L-ornithine and carbamoyl phosphate: step 3/3. This Shigella sonnei (strain Ss046) protein is Argininosuccinate lyase.